The following is a 140-amino-acid chain: Holo-[acyl-carrier-protein] synthase (140 aa).

Mg(2+) is bound by residues D9 and E63.

Belongs to the P-Pant transferase superfamily. AcpS family. Mg(2+) serves as cofactor.

It is found in the cytoplasm. The catalysed reaction is apo-[ACP] + CoA = holo-[ACP] + adenosine 3',5'-bisphosphate + H(+). Functionally, transfers the 4'-phosphopantetheine moiety from coenzyme A to a Ser of acyl-carrier-protein. The protein is Holo-[acyl-carrier-protein] synthase of Paraburkholderia phytofirmans (strain DSM 17436 / LMG 22146 / PsJN) (Burkholderia phytofirmans).